A 324-amino-acid polypeptide reads, in one-letter code: Germination protease (324 aa).

The propeptide occupies 1-10 (MIIVLGIRTD).

Belongs to the peptidase A25 family. Homotetramer. Autoproteolytically processed. The inactive tetrameric zymogen termed p46 autoprocesses to a smaller form termed p41, which is active only during spore germination.

The catalysed reaction is Endopeptidase action with P4 Glu or Asp, P1 preferably Glu &gt; Asp, P1' hydrophobic and P2' Ala.. Its function is as follows. Initiates the rapid degradation of small, acid-soluble proteins during spore germination. The polypeptide is Germination protease (Caldanaerobacter subterraneus subsp. tengcongensis (strain DSM 15242 / JCM 11007 / NBRC 100824 / MB4) (Thermoanaerobacter tengcongensis)).